The chain runs to 41 residues: Photosystem II reaction center protein J (41 aa).

A helical membrane pass occupies residues 9–29 (IPLWFVGMVGGLAALGLLAIF).

It belongs to the PsbJ family. PSII is composed of 1 copy each of membrane proteins PsbA, PsbB, PsbC, PsbD, PsbE, PsbF, PsbH, PsbI, PsbJ, PsbK, PsbL, PsbM, PsbT, PsbX, PsbY, PsbZ, Psb30/Ycf12, at least 3 peripheral proteins of the oxygen-evolving complex and a large number of cofactors. It forms dimeric complexes.

The protein resides in the plastid. The protein localises to the chloroplast thylakoid membrane. One of the components of the core complex of photosystem II (PSII). PSII is a light-driven water:plastoquinone oxidoreductase that uses light energy to abstract electrons from H(2)O, generating O(2) and a proton gradient subsequently used for ATP formation. It consists of a core antenna complex that captures photons, and an electron transfer chain that converts photonic excitation into a charge separation. In Ostreococcus tauri, this protein is Photosystem II reaction center protein J.